Consider the following 356-residue polypeptide: Protein RecA (356 aa).

78–85 contributes to the ATP binding site; that stretch reads GPESSGKT.

The protein belongs to the RecA family.

It localises to the cytoplasm. Its function is as follows. Can catalyze the hydrolysis of ATP in the presence of single-stranded DNA, the ATP-dependent uptake of single-stranded DNA by duplex DNA, and the ATP-dependent hybridization of homologous single-stranded DNAs. It interacts with LexA causing its activation and leading to its autocatalytic cleavage. The chain is Protein RecA from Paracoccus denitrificans.